The primary structure comprises 269 residues: MRVSFTKMHGLGNDFIMLDARAESLPPMTAATARALADRKTGIGCDQVILLEPSDSADFRMRIFNADGGEVEACGNASRAVALLHGEAANVETSGGVIAIAPASGGARVDMGVPRFDWEAIPLAYAMDTLSLPVGWGELEAPAAVNVGNPHVVFFVDDADAVPLDTMGPGIETDPLFPERINVNIASLTGDDALKLHVWERGVGLTRACGTGACATAIAAMRRGLTGRKVAVTLPGGTLQIEWDADDHIIMTGPAAESFRGTFDWGDYS.

Asparagine 13, glutamine 47, and asparagine 65 together coordinate substrate. Cysteine 74 acts as the Proton donor in catalysis. Substrate contacts are provided by residues 75 to 76 (GN), asparagine 149, asparagine 182, and 200 to 201 (ER). The Proton acceptor role is filled by cysteine 209. 210–211 (GT) lines the substrate pocket.

This sequence belongs to the diaminopimelate epimerase family. In terms of assembly, homodimer.

It localises to the cytoplasm. The enzyme catalyses (2S,6S)-2,6-diaminopimelate = meso-2,6-diaminopimelate. The protein operates within amino-acid biosynthesis; L-lysine biosynthesis via DAP pathway; DL-2,6-diaminopimelate from LL-2,6-diaminopimelate: step 1/1. Its function is as follows. Catalyzes the stereoinversion of LL-2,6-diaminopimelate (L,L-DAP) to meso-diaminopimelate (meso-DAP), a precursor of L-lysine and an essential component of the bacterial peptidoglycan. This chain is Diaminopimelate epimerase, found in Erythrobacter litoralis (strain HTCC2594).